The primary structure comprises 391 residues: Immunoglobulin heavy constant alpha 2 (391 aa).

The Extracellular portion of the chain corresponds to 1-357 (ASPTSPKVFP…TPGANLWPTT (357 aa)). Ig-like domains are found at residues 6–98 (PKVF…QDVT), 112–207 (PRLS…ANIT), and 215–317 (PEVH…KTID). An intrachain disulfide couples cysteine 26 to cysteine 85. N-linked (GlcNAc...) asparagine glycosylation is present at asparagine 47. Asparagine 92 carries an N-linked (GlcNAc...) (complex) asparagine glycan. 2 disulfides stabilise this stretch: cysteine 110-cysteine 167 and cysteine 134-cysteine 191. A glycan (N-linked (GlcNAc...) asparagine) is linked at asparagine 131. Asparagine 205 carries N-linked (GlcNAc...) (complex) asparagine glycosylation. Cysteine 237 and cysteine 300 are oxidised to a cystine. Residue aspartate 327 is glycosylated (N-linked (GlcNAc...) (complex) asparagine). The helical transmembrane segment at 358-379 (ITFLTLFLLSLFYSTALTVTSV) threads the bilayer. At 380 to 391 (RGPSGKREGPQY) the chain is on the cytoplasmic side.

As to quaternary structure, immunoglobulins are composed of two identical heavy chains and two identical light chains; disulfide-linked. Monomeric or polymeric. Part of the secretory IgA (sIgA) complex that consists of two, four or five IgA monomers, and two additional non-Ig polypeptides, namely the JCHAIN and the secretory component (the proteolytic product of PIGR).

It is found in the secreted. The protein localises to the cell membrane. Its function is as follows. Constant region of immunoglobulin heavy chains. Immunoglobulins, also known as antibodies, are membrane-bound or secreted glycoproteins produced by B lymphocytes. In the recognition phase of humoral immunity, the membrane-bound immunoglobulins serve as receptors which, upon binding of a specific antigen, trigger the clonal expansion and differentiation of B lymphocytes into immunoglobulins-secreting plasma cells. Secreted immunoglobulins mediate the effector phase of humoral immunity, which results in the elimination of bound antigens. The antigen binding site is formed by the variable domain of one heavy chain, together with that of its associated light chain. Thus, each immunoglobulin has two antigen binding sites with remarkable affinity for a particular antigen. The variable domains are assembled by a process called V-(D)-J rearrangement and can then be subjected to somatic hypermutations which, after exposure to antigen and selection, allow affinity maturation for a particular antigen. Ig alpha is the major immunoglobulin class in body secretions. The chain is Immunoglobulin heavy constant alpha 2 from Homo sapiens (Human).